A 472-amino-acid chain; its full sequence is P2X purinoceptor 2 (472 aa).

The Cytoplasmic segment spans residues 1–34; the sequence is MVRRLARGCWSAFWDYETPKVIVVRNRRLGFVHR. 6 disulfides stabilise this stretch: Cys-9/Cys-430, Cys-113/Cys-164, Cys-124/Cys-147, Cys-130/Cys-158, Cys-214/Cys-224, and Cys-258/Cys-267. The helical transmembrane segment at 35–52 threads the bilayer; it reads MVQLLILLYFVWYVFIVQ. Topologically, residues 53–326 are extracellular; that stretch reads KSYQDSETGP…IVHGQAGKFS (274 aa). Positions 69 and 71 each coordinate ATP. Residue Asn-182 is glycosylated (N-linked (GlcNAc...) asparagine). Thr-184 serves as a coordination point for ATP. Asn-239 carries N-linked (GlcNAc...) asparagine glycosylation. ATP-binding residues include Ser-284, Asn-288, and Arg-290. Asn-298 carries an N-linked (GlcNAc...) asparagine glycan. Position 308 (Lys-308) interacts with ATP. Residues 309-322 are pore-forming motif; that stretch reads AYGIRIDVIVHGQA. Residues 327–347 traverse the membrane as a helical segment; sequence LIPTIINLATALTSIGVGSFL. Topologically, residues 348–472 are cytoplasmic; it reads CDWILLTFMN…STDPKGLAQL (125 aa). The disordered stretch occupies residues 393–472; sequence PPPSHYSQDQ…STDPKGLAQL (80 aa). Polar residues predominate over residues 456-465; that stretch reads PSQQDSTSTD.

The protein belongs to the P2X receptor family. Homotrimer and heterotrimer; functional P2XRs are organized as homomeric and heteromeric trimers. Homotrimer. Forms heterotrimer with P2RX1. Forms heterotrimer with P2RX6. Forms heterotrimer with P2RX3. High levels in pituitary and vas deferens. Lower extent in spinal cord, bladder, brain, adrenal, testis, sensory epithelia from the inner ear.

Its subcellular location is the cell membrane. The catalysed reaction is Ca(2+)(in) = Ca(2+)(out). The enzyme catalyses K(+)(in) = K(+)(out). It catalyses the reaction Na(+)(in) = Na(+)(out). Fast activation by external ATP. Exhibits slow desensitization during prolonged ATP activation. Not sensitive to the ATP agonist:alpha/beta-methylene-ATP. In terms of biological role, ATP-gated nonselective transmembrane cation channel permeable to potassium, sodium and calcium. Activation by extracellular ATP induces a variety of cellular responses, such as excitatory postsynaptic responses in sensory neurons, neuromuscular junctions (NMJ) formation, hearing, perception of taste and peristalsis. In the inner ear, regulates sound transduction and auditory neurotransmission, outer hair cell electromotility, inner ear gap junctions, and K(+) recycling. Mediates synaptic transmission between neurons and from neurons to smooth muscle. This is P2X purinoceptor 2 (P2rx2) from Rattus norvegicus (Rat).